Here is a 487-residue protein sequence, read N- to C-terminus: Putative KilA-N domain-containing protein L37 (487 aa).

Residues 1–12 (MKVQKSSKKPLK) are compositionally biased toward basic residues. The disordered stretch occupies residues 1-137 (MKVQKSSKKP…DINSDDDNNL (137 aa)). A compositionally biased stretch (low complexity) spans 22–34 (KSGSKSMKSSKSS). Composition is skewed to acidic residues over residues 47–77 (DSEI…ESSD) and 111–136 (VLDD…DDNN). The region spanning 175 to 284 (EISKGIYGTF…HKVSKIVNDY (110 aa)) is the KilA-N domain. Residues 290–338 (FDKHEQLIKGKDDKIAELTRKIDKQTSLMKDQKSTIKEQDKKINELLSK) are a coiled coil.

The polypeptide is Putative KilA-N domain-containing protein L37 (Acanthamoeba polyphaga mimivirus (APMV)).